The sequence spans 389 residues: GDP-fucose protein O-fucosyltransferase 1 (389 aa).

Residues 1 to 21 (MRVSKVLTLASFISVCSYSEA) form the signal peptide. The N-linked (GlcNAc...) asparagine glycan is linked to Asn24. Cys35 and Cys37 are joined by a disulfide. 40–43 (RFGN) contacts substrate. A disulfide bridge connects residues Cys119 and Cys135. 238–240 (HLR) is a binding site for substrate. 2 disulfide bridges follow: Cys249–Cys281 and Cys266–Cys353. Residue 356 to 357 (TF) coordinates substrate.

Belongs to the glycosyltransferase 65 family. In terms of assembly, monomer.

The protein localises to the endoplasmic reticulum. The enzyme catalyses L-seryl-[protein] + GDP-beta-L-fucose = 3-O-(alpha-L-fucosyl)-L-seryl-[protein] + GDP + H(+). It catalyses the reaction L-threonyl-[protein] + GDP-beta-L-fucose = 3-O-(alpha-L-fucosyl)-L-threonyl-[protein] + GDP + H(+). The protein operates within protein modification; protein glycosylation. Functionally, catalyzes the reaction that attaches fucose through an O-glycosidic linkage to a conserved serine or threonine residue found in the consensus sequence C2-X(4,5)-[S/T]-C3 of EGF domains, where C2 and C3 are the second and third conserved cysteines. Specifically uses GDP-fucose as donor substrate and proper disulfide pairing of the substrate EGF domains is required for fucose transfer. This chain is GDP-fucose protein O-fucosyltransferase 1, found in Caenorhabditis elegans.